The primary structure comprises 345 residues: MNHSIAMGNLEDLVNAAIKLFDNAESIVDLEQIKAQYLGKTGEITILLKGLRELTPEERPVMGERINQAKKLLEDALIERRNLIQEKNMSARLAEESLDVSLPGRGLGMGGVHPVTRTLIRIESLFHSIGFGVATGPEIETDFYNFTALNIAENHPARAMHDTFYVDGGKLLRTHTSPVQIHYMQNHRPPIKIIAPGRVYRCDSDVTHTPMFHQVEGLWIDENVSFSALKGVLVEFMRNFFEKDNLSVRFRPSFFPFTEPSAEMDIACVMCNGKGCRVCGETGWLEVLGCGMVHPNVMNHVGLDSEEHIGFAFGLGVERLAMLRYGVNDLRLFFENDLRFLKQFN.

Residue Glu-259 coordinates Mg(2+).

This sequence belongs to the class-II aminoacyl-tRNA synthetase family. Phe-tRNA synthetase alpha subunit type 1 subfamily. In terms of assembly, tetramer of two alpha and two beta subunits. The cofactor is Mg(2+).

The protein resides in the cytoplasm. The enzyme catalyses tRNA(Phe) + L-phenylalanine + ATP = L-phenylalanyl-tRNA(Phe) + AMP + diphosphate + H(+). The polypeptide is Phenylalanine--tRNA ligase alpha subunit (Nitrosomonas europaea (strain ATCC 19718 / CIP 103999 / KCTC 2705 / NBRC 14298)).